Consider the following 395-residue polypeptide: MANDYLFTSESVSEGHPDKVADQISDAILDAILAQDKYSRVAAETLCNTGLVVLAGEITTTANIDYIQIARDTIKRIGYDNTDYGIDYRGCAVLVAYDKQSPDIAQGVDRAHDNNLDQGAGDQGLMFGYACDETPELMPLPIHLSHRLVERQANLRRDGRLPWLRPDAKSQVTVRYVDGKPHSIDTVVLSTQHAPDIDLPALREAVIEEIIKPTLPADLIKGDIKFLVNPTGRFVIGGPQGDCGLTGRKIIVDTYGGAAPHGGGAFSGKDPSKVDRSAAYAGRYVAKNIVAAGLASRALIQVSYAIGVAEPTSVMVNTFGTGRVSDETITKLVREHFDLRPKGIIQMLDLLRPIYEKTAAYGHFGREEPEFSWEAADKALALAEAAGVEPAVQVA.

An ATP-binding site is contributed by His16. Residue Asp18 coordinates Mg(2+). Residue Glu44 participates in K(+) binding. 2 residues coordinate L-methionine: Glu57 and Gln100. Residues 100–110 (QSPDIAQGVDR) are flexible loop. Residues 167–169 (DAK), 233–234 (RF), Asp242, 248–249 (RK), Ala265, and Lys269 contribute to the ATP site. Asp242 provides a ligand contact to L-methionine. Lys273 provides a ligand contact to L-methionine.

It belongs to the AdoMet synthase family. Homotetramer; dimer of dimers. The cofactor is Mg(2+). It depends on K(+) as a cofactor.

The protein resides in the cytoplasm. It carries out the reaction L-methionine + ATP + H2O = S-adenosyl-L-methionine + phosphate + diphosphate. It functions in the pathway amino-acid biosynthesis; S-adenosyl-L-methionine biosynthesis; S-adenosyl-L-methionine from L-methionine: step 1/1. In terms of biological role, catalyzes the formation of S-adenosylmethionine (AdoMet) from methionine and ATP. The overall synthetic reaction is composed of two sequential steps, AdoMet formation and the subsequent tripolyphosphate hydrolysis which occurs prior to release of AdoMet from the enzyme. The sequence is that of S-adenosylmethionine synthase from Burkholderia thailandensis (strain ATCC 700388 / DSM 13276 / CCUG 48851 / CIP 106301 / E264).